Consider the following 341-residue polypeptide: Killer cell immunoglobulin-like receptor 2DL3 (341 aa).

The N-terminal stretch at 1 to 21 (MSLMVVSMVCVGFFLLQGAWP) is a signal peptide. The Extracellular portion of the chain corresponds to 22–245 (HEGVHRKPSL…SETGNPRHLH (224 aa)). Ig-like C2-type domains are found at residues 42–107 (EETV…VTHS) and 142–205 (GESV…FRDS). 2 cysteine pairs are disulfide-bonded: cysteine 49/cysteine 100 and cysteine 149/cysteine 198. N-linked (GlcNAc...) asparagine glycans are attached at residues asparagine 84, asparagine 178, and asparagine 211. A disordered region spans residues 220–239 (VTGNPSNSWPSPTEPSSETG). A compositionally biased stretch (low complexity) spans 223–239 (NPSNSWPSPTEPSSETG). Residues 246–265 (VLIGTSVVIILFILLLFFLL) form a helical membrane-spanning segment. At 266–341 (HRWCCNKKNA…VYTELPNAEP (76 aa)) the chain is on the cytoplasmic side.

Belongs to the immunoglobulin superfamily. As to quaternary structure, interacts with ARRB2.

Its subcellular location is the cell membrane. Functionally, receptor on natural killer (NK) cells for HLA-C alleles (HLA-Cw1, HLA-Cw3 and HLA-Cw7). Inhibits the activity of NK cells thus preventing cell lysis. This is Killer cell immunoglobulin-like receptor 2DL3 from Homo sapiens (Human).